The following is a 189-amino-acid chain: UPF0398 protein LVIS_0849 (189 aa).

The protein belongs to the UPF0398 family.

This is UPF0398 protein LVIS_0849 from Levilactobacillus brevis (strain ATCC 367 / BCRC 12310 / CIP 105137 / JCM 1170 / LMG 11437 / NCIMB 947 / NCTC 947) (Lactobacillus brevis).